Reading from the N-terminus, the 647-residue chain is RalBP1-associated Eps domain-containing protein 2 (647 aa).

The EH 1 domain occupies 21-122 (EQQCYSELFA…RTESIKCELP (102 aa)). Residues 156 to 233 (EKNSFKRMDN…PSSEGPGAKP (78 aa)) form a disordered region. Residues 158–170 (NSFKRMDNEDKQE) are compositionally biased toward basic and acidic residues. Residues 221–230 (PEGPSSEGPG) are compositionally biased toward low complexity. Residue serine 239 is modified to Phosphoserine. In terms of domain architecture, EH 2 spans 268–359 (QREYYVNQFR…LQPEYLQAAF (92 aa)). One can recognise an EF-hand domain in the interval 301–336 (LSIPELSYIWELSDADCDGALTLSEFCAAFHLIVAR). Ca(2+)-binding residues include aspartate 314, aspartate 316, aspartate 318, and glutamate 325. Residues 402 to 478 (PTQDVTTADD…PRPQKTHSRA (77 aa)) are disordered. A Phosphothreonine modification is found at threonine 466. Serine 480 is modified (phosphoserine). The segment at 492–568 (PAANSGLLPP…PENQTTESQE (77 aa)) is disordered. The segment covering 499–510 (LPPPPALPPRPC) has biased composition (pro residues). An interaction with RALBP1 region spans residues 501 to 647 (PPPALPPRPC…LEQLRPVTVL (147 aa)). Residues 524 to 539 (SQLNRAPSQAAESSPT) are compositionally biased toward polar residues. The interaction with ASAP1 stretch occupies residues 548 to 647 (PPSKPIRRKF…LEQLRPVTVL (100 aa)). Positions 599 to 640 (IQTAIRKNKEANAVLARLNSELQQQLKEVHQERIALENQLEQ) form a coiled coil.

In terms of assembly, interacts with EPN1. Interacts with EPS15 AND EPS15L1. Interacts with RALBP1; can form a ternary complex with activated Ral (RALA or RALB). Interacts with ASAP1; the interaction is direct and this complex can bind paxillin. Also forms a ternary complex with RALBP1 and ASAP1. Interacts with GRB2. In terms of processing, tyrosine-phosphorylated upon stimulation of cells with EGF. Phosphorylation on Tyr-residues induces its association with the EGF receptor probably indirectly through an adapter like GRB2.

Its subcellular location is the cytoplasm. Functionally, involved in ligand-dependent receptor mediated endocytosis of the EGF and insulin receptors as part of the Ral signaling pathway. By controlling growth factor receptors endocytosis may regulate cell survival. Through ASAP1 may regulate cell adhesion and migration. The sequence is that of RalBP1-associated Eps domain-containing protein 2 (Reps2) from Mus musculus (Mouse).